The primary structure comprises 223 residues: MKRN2 opposite strand protein (223 aa).

The chain is MKRN2 opposite strand protein (MKRN2OS) from Homo sapiens (Human).